The sequence spans 130 residues: MNKNEVKTYLLKKNTFQNISITKDAIEQILFLINLNSDNIGIRLSIKKSGCAGFRYSMKLLKASELKKEKDEKEVSFFYQNILIYIYSKDIPFLEGIRIDFVKNNINKIFKFYNTKLEKFCGCGESFSIN.

Belongs to the HesB/IscA family.

This is an uncharacterized protein from Buchnera aphidicola subsp. Acyrthosiphon pisum (strain APS) (Acyrthosiphon pisum symbiotic bacterium).